We begin with the raw amino-acid sequence, 434 residues long: Beta-enolase (434 aa).

At Ala2 the chain carries N-acetylalanine. Thr72 is subject to Phosphothreonine. Ser83 and Ser157 each carry phosphoserine. Residues His158 and Glu167 each contribute to the substrate site. Phosphoserine is present on Ser176. Thr205 carries the phosphothreonine modification. Glu210 serves as the catalytic Proton donor. Position 229 is a phosphothreonine (Thr229). Tyr236 bears the Phosphotyrosine mark. Residue Asp245 participates in Mg(2+) binding. The residue at position 263 (Ser263) is a Phosphoserine. Residues Glu293 and Asp318 each contribute to the substrate site. 2 residues coordinate Mg(2+): Glu293 and Asp318. Lys343 functions as the Proton acceptor in the catalytic mechanism. Substrate is bound by residues 370-373 (SHRS) and Lys394.

Belongs to the enolase family. As to quaternary structure, mammalian enolase is composed of 3 isozyme subunits, alpha, beta and gamma, which can form homodimers or heterodimers which are cell-type and development-specific. Interacts with PNKD. Mg(2+) serves as cofactor. The alpha/alpha homodimer is expressed in embryo and in most adult tissues. The alpha/beta heterodimer and the beta/beta homodimer are found in striated muscle, and the alpha/gamma heterodimer and the gamma/gamma homodimer in neurons.

The protein resides in the cytoplasm. It catalyses the reaction (2R)-2-phosphoglycerate = phosphoenolpyruvate + H2O. It functions in the pathway carbohydrate degradation; glycolysis; pyruvate from D-glyceraldehyde 3-phosphate: step 4/5. In terms of biological role, glycolytic enzyme that catalyzes the conversion of 2-phosphoglycerate to phosphoenolpyruvate. Appears to have a function in striated muscle development and regeneration. In Oryctolagus cuniculus (Rabbit), this protein is Beta-enolase (ENO3).